Reading from the N-terminus, the 461-residue chain is Cysteine--tRNA ligase (461 aa).

Cys28 contributes to the Zn(2+) binding site. The 'HIGH' region motif lies at 30 to 40 (ITIYDLCHIGH). Zn(2+) contacts are provided by Cys209, His234, and Glu238. Residues 266–270 (KMSKS) carry the 'KMSKS' region motif. Residue Lys269 coordinates ATP.

It belongs to the class-I aminoacyl-tRNA synthetase family. Monomer. It depends on Zn(2+) as a cofactor.

The protein localises to the cytoplasm. It catalyses the reaction tRNA(Cys) + L-cysteine + ATP = L-cysteinyl-tRNA(Cys) + AMP + diphosphate. This Photorhabdus laumondii subsp. laumondii (strain DSM 15139 / CIP 105565 / TT01) (Photorhabdus luminescens subsp. laumondii) protein is Cysteine--tRNA ligase.